We begin with the raw amino-acid sequence, 422 residues long: N-acylglucosamine 2-epimerase (422 aa).

The segment at 185–206 (LLNLVEQLGEADEELAGISAEL) is leucine-zipper.

This sequence belongs to the N-acylglucosamine 2-epimerase family. As to quaternary structure, homodimer. Forms a heterodimer with renin and inhibits its activity.

The enzyme catalyses an N-acyl-D-glucosamine = an N-acyl-D-mannosamine. The protein operates within amino-sugar metabolism; N-acetylneuraminate degradation. Functionally, catalyzes the interconversion of N-acetylglucosamine to N-acetylmannosamine. Involved in the N-glycolylneuraminic acid (Neu5Gc) degradation pathway. This Bos taurus (Bovine) protein is N-acylglucosamine 2-epimerase (RENBP).